Here is a 470-residue protein sequence, read N- to C-terminus: Dendritic cell-specific transmembrane protein (470 aa).

Residues 1 to 33 (MRLWTLGTSIFLRLWGTYVFPRSPSWLDFIQHL) are Cytoplasmic-facing. Residues 34–54 (GVCCFVAFLSVSLFSAAFYWI) traverse the membrane as a helical segment. Position 55 (Leu-55) is a topological domain, extracellular. A helical transmembrane segment spans residues 56 to 76 (PPVALLSSVWMITCVFLCCSK). The Cytoplasmic portion of the chain corresponds to 77–97 (RARCFILLAVLSCGLREGRNA). A helical membrane pass occupies residues 98–118 (LIAAGTGVVIFGHVENIFYNF). Residues 119–209 (RGLLDSMTCN…MVVTTELLTS (91 aa)) are Extracellular-facing. A helical transmembrane segment spans residues 210 to 230 (VGQKLLALAGLLLILVSTGLF). The Cytoplasmic segment spans residues 231-292 (LKRFLGPCGW…LQLTPKEKKT (62 aa)). A helical membrane pass occupies residues 293–313 (LGLFFLPVLTYLYMWVLFAAV). Residues 314 to 376 (DYLLYRLISS…PKPRLSVSET (63 aa)) are Extracellular-facing. The helical transmembrane segment at 377–397 (WVPLSIILLTLIILGLLSSML) threads the bilayer. The Cytoplasmic segment spans residues 398–470 (MQLKILVSVS…QTIPANEDDL (73 aa)).

In terms of assembly, interacts with CREB3. Monomer. Homodimer. Isoform 1 interacts (via the C-terminus cytoplasmic tail) with OS9 isoform 1 (via the C-terminus tail); the interaction induces DCSTAMP redistribution to the endoplasmic reticulum-Golgi intermediate compartment. Isoform 1 interacts (via the C-terminus cytoplasmic tail) with OS9 isoform 2 (via the C-terminus tail). Post-translationally, glycosylated. Expressed in macrophages and bone marrow dendritic cells (BM-DC). Weakly expressed in the spleen and lymph node. Highly expressed in multi-nuclear osteoclasts compared to mono-nuclear macrophages. Expressed in foreign body giant cells (FBGCs). Isoform 1 and isoform 2 are expressed in osteoclasts.

It localises to the cell membrane. The protein resides in the endoplasmic reticulum membrane. It is found in the endoplasmic reticulum-Golgi intermediate compartment membrane. Its subcellular location is the endosome. Its function is as follows. Probable cell surface receptor that plays several roles in cellular fusion, cell differentiation, bone and immune homeostasis. Plays a role in TNFSF11-mediated osteoclastogenesis. Cooperates with OCSTAMP in modulating cell-cell fusion in both osteoclasts and foreign body giant cells (FBGCs). Participates in osteoclast bone resorption. Involved in inducing the expression of tartrate-resistant acid phosphatase in osteoclast precursors. Plays a role in haematopoietic stem cell differentiation of bone marrow cells toward the myeloid lineage. Inhibits the development of neutrophilic granulocytes. Plays also a role in the regulation of dendritic cell (DC) antigen presentation activity by controlling phagocytic activity. Involved in the maintenance of immune self-tolerance and avoidance of autoimmune reactions. This Mus musculus (Mouse) protein is Dendritic cell-specific transmembrane protein (Dcstamp).